The following is a 165-amino-acid chain: Ribosome maturation factor RimM (165 aa).

Residues 89–161 enclose the PRC barrel domain; the sequence is EADTHYIVDL…KIVVKPVRQW (73 aa).

The protein belongs to the RimM family. In terms of assembly, binds ribosomal protein uS19.

The protein localises to the cytoplasm. Its function is as follows. An accessory protein needed during the final step in the assembly of 30S ribosomal subunit, possibly for assembly of the head region. Essential for efficient processing of 16S rRNA. May be needed both before and after RbfA during the maturation of 16S rRNA. It has affinity for free ribosomal 30S subunits but not for 70S ribosomes. The chain is Ribosome maturation factor RimM from Clostridium botulinum (strain Alaska E43 / Type E3).